The chain runs to 187 residues: Adenylate kinase (187 aa).

10 to 15 is an ATP binding site; the sequence is GSGKGT. Positions 30 to 59 are NMP; sequence STGDLLRAEVAAGSPLGLKAKEVMARGDLV. Residues Thr-31, Arg-36, 57-59, 85-88, and Gln-92 contribute to the AMP site; these read DLV and GYPR. Residues 126 to 136 are LID; that stretch reads GRAKAEGREDD. Arg-127 contributes to the ATP binding site. The AMP site is built by Arg-133 and Arg-144. Residue Gly-172 coordinates ATP.

It belongs to the adenylate kinase family. Monomer.

It localises to the cytoplasm. It carries out the reaction AMP + ATP = 2 ADP. The protein operates within purine metabolism; AMP biosynthesis via salvage pathway; AMP from ADP: step 1/1. Catalyzes the reversible transfer of the terminal phosphate group between ATP and AMP. Plays an important role in cellular energy homeostasis and in adenine nucleotide metabolism. The polypeptide is Adenylate kinase (Xanthomonas campestris pv. campestris (strain 8004)).